A 355-amino-acid chain; its full sequence is Inner membrane protein YghQ (355 aa).

At M1–L37 the chain is on the periplasmic side. Residues L38–V58 traverse the membrane as a helical segment. Over Q59–S100 the chain is Cytoplasmic. Residues F101–F121 form a helical membrane-spanning segment. The Periplasmic portion of the chain corresponds to L122–W134. A helical transmembrane segment spans residues L135–L155. Over R156 to A177 the chain is Cytoplasmic. Residues G178–V198 traverse the membrane as a helical segment. Topologically, residues S199 to V261 are periplasmic. A helical transmembrane segment spans residues L262 to F282. The Cytoplasmic portion of the chain corresponds to D283–G323. The helical transmembrane segment at I324–F344 threads the bilayer. The Periplasmic segment spans residues G345 to I355.

It localises to the cell inner membrane. The chain is Inner membrane protein YghQ (yghQ) from Escherichia coli (strain K12).